The chain runs to 1352 residues: DNA-directed RNA polymerase subunit beta (1352 aa).

It belongs to the RNA polymerase beta chain family. In terms of assembly, the RNAP catalytic core consists of 2 alpha, 1 beta, 1 beta' and 1 omega subunit. When a sigma factor is associated with the core the holoenzyme is formed, which can initiate transcription.

The catalysed reaction is RNA(n) + a ribonucleoside 5'-triphosphate = RNA(n+1) + diphosphate. Its function is as follows. DNA-dependent RNA polymerase catalyzes the transcription of DNA into RNA using the four ribonucleoside triphosphates as substrates. This chain is DNA-directed RNA polymerase subunit beta, found in Hydrogenovibrio crunogenus (strain DSM 25203 / XCL-2) (Thiomicrospira crunogena).